The sequence spans 96 residues: Pyrimidine/purine nucleoside phosphorylase (96 aa).

It belongs to the nucleoside phosphorylase PpnP family.

The catalysed reaction is a purine D-ribonucleoside + phosphate = a purine nucleobase + alpha-D-ribose 1-phosphate. The enzyme catalyses adenosine + phosphate = alpha-D-ribose 1-phosphate + adenine. It carries out the reaction cytidine + phosphate = cytosine + alpha-D-ribose 1-phosphate. It catalyses the reaction guanosine + phosphate = alpha-D-ribose 1-phosphate + guanine. The catalysed reaction is inosine + phosphate = alpha-D-ribose 1-phosphate + hypoxanthine. The enzyme catalyses thymidine + phosphate = 2-deoxy-alpha-D-ribose 1-phosphate + thymine. It carries out the reaction uridine + phosphate = alpha-D-ribose 1-phosphate + uracil. It catalyses the reaction xanthosine + phosphate = alpha-D-ribose 1-phosphate + xanthine. Functionally, catalyzes the phosphorolysis of diverse nucleosides, yielding D-ribose 1-phosphate and the respective free bases. Can use uridine, adenosine, guanosine, cytidine, thymidine, inosine and xanthosine as substrates. Also catalyzes the reverse reactions. This is Pyrimidine/purine nucleoside phosphorylase from Serratia proteamaculans (strain 568).